The chain runs to 327 residues: Acyl-CoA desaturase (327 aa).

Residues 1-39 (MPDREIKSPIWHPEPGTVEDVFDHTYKEKEGPKPPTVIV) lie on the Cytoplasmic side of the membrane. Residues 40–60 (WRNVILMSLLHLGALYGLFLF) form a helical membrane-spanning segment. A substrate-binding site is contributed by Asn-42. Over 61 to 64 (PSAR) the chain is Lumenal. A helical transmembrane segment spans residues 65–85 (ALTWIWFFGCLLFSALGITAG). The Cytoplasmic portion of the chain corresponds to 86-184 (AHRLWSHRSY…DKVVMFQRRF (99 aa)). 2 residues coordinate Fe cation: His-87 and His-92. The Histidine box-1 signature appears at 87–92 (HRLWSH). The substrate site is built by Asn-115, Arg-122, and Asp-123. Fe cation contacts are provided by His-124, His-127, and His-128. A Histidine box-2 motif is present at residues 124 to 128 (HRVHH). 2 residues coordinate substrate: Arg-155 and Lys-156. The helical transmembrane segment at 185 to 204 (YKPSVLLMCFFVPTFVPWYV) threads the bilayer. The Lumenal portion of the chain corresponds to 205-208 (WGES). A helical membrane pass occupies residues 209 to 230 (LWVAYFVPALLRYALVLNATWL). Trp-229 provides a ligand contact to substrate. The Cytoplasmic segment spans residues 231-327 (VNSAAHMWGN…RTGDGSHWSG (97 aa)). His-236, His-265, His-268, and His-269 together coordinate Fe cation. Positions 265 to 269 (HNYHH) match the Histidine box-3 motif.

It belongs to the fatty acid desaturase type 1 family. It depends on Fe(2+) as a cofactor.

It localises to the endoplasmic reticulum membrane. It catalyses the reaction octadecanoyl-CoA + 2 Fe(II)-[cytochrome b5] + O2 + 2 H(+) = (9Z)-octadecenoyl-CoA + 2 Fe(III)-[cytochrome b5] + 2 H2O. Functionally, stearoyl-CoA desaturase that utilizes O(2) and electrons from reduced cytochrome b5 to introduce the first double bond into saturated fatty acyl-CoA substrates. Has high specificity and catalyzes the insertion of a cis double bond at the delta-9 position into fatty acyl-CoA substrates including palmitoyl-CoA and stearoyl-CoA. Contributes to the biosynthesis of membrane phospholipids, cholesterol esters and triglycerides. The chain is Acyl-CoA desaturase from Cyprinus carpio (Common carp).